A 68-amino-acid polypeptide reads, in one-letter code: MDQVMQFVEPSRQFVKDSIRLVKRCTKPDRKEFQKIAMATAIGFAIMGFIGFFVKLIHIPINNIIVGG.

Position 1 is an N-acetylmethionine (Met-1). At 1 to 32 (MDQVMQFVEPSRQFVKDSIRLVKRCTKPDRKE) the chain is on the cytoplasmic side. Ser-18 is modified (phosphoserine). Residues 33 to 61 (FQKIAMATAIGFAIMGFIGFFVKLIHIPI) form a helical membrane-spanning segment. Residues 62-68 (NNIIVGG) are Extracellular-facing.

Belongs to the SecE/SEC61-gamma family. The SEC61 channel-forming translocon complex consists of channel-forming core components SEC61A1, SEC61B and SEC61G and different auxiliary components such as SEC62 and SEC63. The SEC61 channel associates with the multi-pass translocon (MPT) complex.

The protein resides in the endoplasmic reticulum membrane. Component of SEC61 channel-forming translocon complex that mediates transport of signal peptide-containing precursor polypeptides across the endoplasmic reticulum (ER). Forms a ribosome receptor and a gated pore in the ER membrane, both functions required for cotranslational translocation of nascent polypeptides. The SEC61 channel is also involved in ER membrane insertion of transmembrane proteins: it mediates membrane insertion of the first few transmembrane segments of proteins, while insertion of subsequent transmembrane regions of multi-pass membrane proteins is mediated by the multi-pass translocon (MPT) complex. The SEC61 channel cooperates with the translocating protein TRAM1 to import nascent proteins into the ER. The sequence is that of Protein transport protein Sec61 subunit gamma (SEC61G) from Bos taurus (Bovine).